Here is a 76-residue protein sequence, read N- to C-terminus: Tautomerase PptA (76 aa).

Catalysis depends on Pro2, which acts as the Proton acceptor; via imino nitrogen.

It belongs to the 4-oxalocrotonate tautomerase family. PptA subfamily. As to quaternary structure, homodimer.

Its subcellular location is the cytoplasm. This is Tautomerase PptA from Pectobacterium atrosepticum (strain SCRI 1043 / ATCC BAA-672) (Erwinia carotovora subsp. atroseptica).